The chain runs to 333 residues: Homeobox protein engrailed-2 (333 aa).

3 disordered regions span residues M1–M49, G95–L206, and S223–A250. 2 stretches are compositionally biased toward gly residues: residues P25 to S36 and G95 to G117. Composition is skewed to low complexity over residues P142–P151 and L191–S200. The segment at residues D244–T303 is a DNA-binding region (homeobox).

The protein belongs to the engrailed homeobox family.

The protein resides in the nucleus. In Homo sapiens (Human), this protein is Homeobox protein engrailed-2 (EN2).